The primary structure comprises 169 residues: Methanogen homoaconitase small subunit (169 aa).

Positions 27–30 match the YLRT motif; sequence YLRT.

This sequence belongs to the LeuD family. LeuD type 2 subfamily. As to quaternary structure, heterotetramer of 2 HacA and 2 HacB proteins.

It catalyses the reaction (2R)-homocitrate = (2R,3S)-homoisocitrate. The catalysed reaction is (2R)-homocitrate = cis-homoaconitate + H2O. The enzyme catalyses (2R,3S)-homoisocitrate = cis-homoaconitate + H2O. It carries out the reaction cis-(homo)2aconitate + H2O = (2R,3S)-iso(homo)2citrate. It catalyses the reaction cis-(homo)3aconitate + H2O = (2R,3S)-iso(homo)3citrate. It participates in organic acid metabolism; 2-oxosuberate biosynthesis. In terms of biological role, component of a hydro-lyase with broad substrate specificity for cis-unsaturated tricarboxylic acids. Catalyzes both the reversible dehydration of (R)-homocitrate ((R)-2-hydroxybutane-1,2,4-tricarboxylate) to produce cis-homoaconitate ((Z)-but-1-ene-1,2,4-tricarboxylate), and its hydration to homoisocitrate ((1R,2S)-1-hydroxybutane-1,2,4-tricarboxylate). Is also able to hydrate the analogous longer chain substrates cis-homo(2)-aconitate, cis-homo(3)-aconitate. These reactions are part of the biosynthesis pathway of coenzyme B. The sequence is that of Methanogen homoaconitase small subunit (hacB) from Methanosarcina mazei (strain ATCC BAA-159 / DSM 3647 / Goe1 / Go1 / JCM 11833 / OCM 88) (Methanosarcina frisia).